A 115-amino-acid chain; its full sequence is uncharacterized protein (115 aa).

A signal peptide spans 1-29; that stretch reads MKKAMAILAVLAAAAVICGLLFFHNDVTD.

This is an uncharacterized protein from Bacillus subtilis (strain 168).